We begin with the raw amino-acid sequence, 161 residues long: Zinc finger protein KNUCKLES (161 aa).

Residues 1 to 33 (MAEPPPSYLHFVGPAKTRSSSKRHSFSSSAHPA) form a disordered region. A C2H2-type zinc finger spans residues 38 to 60 (FPCQYCPRKFYTSQALGGHQNAH). Residues 142–161 (GGNGVMEEDEPLDLDLSLRL) form a disordered region. The EAR-like (transcriptional repression) signature appears at 155–159 (LDLSL).

In terms of tissue distribution, first expressed in developing carpel primordia, and later in stamens and ovules of flower buds.

The protein localises to the nucleus. In terms of biological role, may function as a transcriptional repressor of cellular proliferation that regulates floral determinacy and relative size of basal pattern elements along the proximo-distal axis of the developing gynoecium. This chain is Zinc finger protein KNUCKLES (KNU), found in Arabidopsis thaliana (Mouse-ear cress).